The following is a 136-amino-acid chain: Large ribosomal subunit protein uL16 (136 aa).

The protein belongs to the universal ribosomal protein uL16 family. In terms of assembly, part of the 50S ribosomal subunit.

In terms of biological role, binds 23S rRNA and is also seen to make contacts with the A and possibly P site tRNAs. The polypeptide is Large ribosomal subunit protein uL16 (Vibrio atlanticus (strain LGP32) (Vibrio splendidus (strain Mel32))).